Reading from the N-terminus, the 606-residue chain is ATP-dependent rRNA helicase spb4 (606 aa).

The short motif at 1–29 is the Q motif element; it reads MSFQSINIDKWLKNAVAAQGFKKMTPVQA. The region spanning 32 to 213 is the Helicase ATP-binding domain; that stretch reads IPLFLKNKDL…KIAGLRNSVR (182 aa). 45–52 is a binding site for ATP; the sequence is AVTGSGKT. Residues 161–164 carry the DEAD box motif; it reads DEAD. The Helicase C-terminal domain maps to 246 to 400; that stretch reads CMIHLLCTIE…ALDLSRLKVL (155 aa). Positions 521–574 are disordered; sequence KQKEVKEKRNTRREKRKSKKEFLKAQKNEASNNLKQEIVSKAGAQETENDDLID. Residues 521-601 adopt a coiled-coil conformation; the sequence is KQKEVKEKRN…KSKKRKNQAS (81 aa). Residues 529–539 are compositionally biased toward basic residues; the sequence is RNTRREKRKSK.

This sequence belongs to the DEAD box helicase family. DDX55/SPB4 subfamily. Component of pre-60S ribosomal complexes.

Its subcellular location is the nucleus. The protein localises to the nucleolus. The enzyme catalyses ATP + H2O = ADP + phosphate + H(+). Its function is as follows. ATP-binding RNA helicase involved in the biogenesis of 60S ribosomal subunits. Binds 90S pre-ribosomal particles and dissociates from pre-60S ribosomal particles after processing of 27SB pre-rRNA. Required for the normal formation of 18S rRNA through the processing of pre-rRNAs at sites A0, A1 and A2, and the normal formation of 25S and 5.8S rRNAs through the processing of pre-rRNAs at sites C1 and C2. The chain is ATP-dependent rRNA helicase spb4 from Schizosaccharomyces pombe (strain 972 / ATCC 24843) (Fission yeast).